Reading from the N-terminus, the 92-residue chain is Probable acyl carrier protein (92 aa).

The region spanning 11 to 92 is the Carrier domain; that stretch reads QVTFEELSAL…QVNATLRTAV (82 aa). Ser49 bears the O-(pantetheine 4'-phosphoryl)serine mark.

4'-phosphopantetheine is transferred from CoA to a specific serine of the apo-ACP-like protein.

Involved in developmentally regulated synthesis of a compound biosynthetically related to polyketide antibiotics which is essential for spore color in Streptomyces halstedii. The protein is Probable acyl carrier protein (sch3) of Streptomyces halstedii.